A 361-amino-acid polypeptide reads, in one-letter code: 3-dehydroquinate synthase (361 aa).

NAD(+) is bound by residues 72–77 (SGEKEK), 130–131 (TT), K142, and K151. The Zn(2+) site is built by E184, H247, and H264.

The protein belongs to the sugar phosphate cyclases superfamily. Dehydroquinate synthase family. Requires Co(2+) as cofactor. Zn(2+) serves as cofactor. The cofactor is NAD(+).

It localises to the cytoplasm. It catalyses the reaction 7-phospho-2-dehydro-3-deoxy-D-arabino-heptonate = 3-dehydroquinate + phosphate. Its pathway is metabolic intermediate biosynthesis; chorismate biosynthesis; chorismate from D-erythrose 4-phosphate and phosphoenolpyruvate: step 2/7. Its function is as follows. Catalyzes the conversion of 3-deoxy-D-arabino-heptulosonate 7-phosphate (DAHP) to dehydroquinate (DHQ). The protein is 3-dehydroquinate synthase of Bacillus cereus (strain AH820).